A 1597-amino-acid chain; its full sequence is Glucosyltransferase-I (1597 aa).

An N-terminal signal peptide occupies residues 1–38 (MEKNERFKMHKVKKRWVTISVASATMLASALGASVASA). A disordered region spans residues 52–120 (LTADQTTTNQ…QTTTNANEAK (69 aa)). Positions 53-114 (TADQTTTNQD…STDTAAQTTT (62 aa)) are enriched in low complexity. Cell wall-binding repeat units lie at residues 157 to 176 (MSNV…DGNV) and 178 to 197 (KNFA…TGAY). The tract at residues 200 to 1050 (TSKVEADKSG…DQASNKYLNV (851 aa)) is catalytic; approximate. 22 Cell wall-binding repeats span residues 1089-1108 (TDSF…DGYM), 1109-1128 (VTGA…NGAA), 1130-1150 (RNTV…DGKR), 1152-1172 (ENGY…GVMA), 1173-1191 (LGLT…DGVQ), 1193-1214 (KDKI…NGNA), 1216-1236 (TNTF…DGVA), 1237-1256 (VTGA…NGQQ), 1258-1279 (KGDF…SGDM), 1281-1301 (TNTF…DGAA), 1302-1321 (VTGA…NGQQ), 1323-1343 (KGDI…QTGE), 1344-1365 (QVFN…DGTA), 1366-1380 (QTQA…KDGS), 1415-1434 (LTGA…NGHQ), 1436-1457 (KGQL…SGDQ), 1459-1478 (FNKS…DGTA), 1485-1505 (KGQT…EGQY), 1508-1527 (GSGW…DGKV), 1528-1547 (LTGL…NGIQ), 1549-1570 (KGKA…SGSM), and 1572-1591 (TNQW…DGAA). Positions 1099–1597 (LYYFGQDGYM…DGAAVYRGWN (499 aa)) are glucan-binding; approximate.

Belongs to the glycosyl hydrolase 70 family.

It is found in the secreted. The catalysed reaction is [(1-&gt;6)-alpha-D-glucosyl](n) + sucrose = [(1-&gt;6)-alpha-D-glucosyl](n+1) + D-fructose. Production of extracellular glucans, that are thought to play a key role in the development of the dental plaque because of their ability to adhere to smooth surfaces and mediate the aggregation of bacterial cells and food debris. This Streptococcus downei (Streptococcus sobrinus) protein is Glucosyltransferase-I (gtfI).